The sequence spans 452 residues: Tol-Pal system protein TolB (452 aa).

The first 31 residues, 1–31, serve as a signal peptide directing secretion; sequence MCGVRRGMGVLLLFCAVALCAMPFVVRSVWG.

The protein belongs to the TolB family. As to quaternary structure, the Tol-Pal system is composed of five core proteins: the inner membrane proteins TolA, TolQ and TolR, the periplasmic protein TolB and the outer membrane protein Pal. They form a network linking the inner and outer membranes and the peptidoglycan layer.

The protein localises to the periplasm. In terms of biological role, part of the Tol-Pal system, which plays a role in outer membrane invagination during cell division and is important for maintaining outer membrane integrity. This chain is Tol-Pal system protein TolB, found in Syntrophus aciditrophicus (strain SB).